Reading from the N-terminus, the 351-residue chain is Formyl peptide receptor-related sequence 1 (351 aa).

The Extracellular segment spans residues 1 to 27 (METNYSIPLNGSDVVIYDSTISRVLWI). N4 and N10 each carry an N-linked (GlcNAc...) asparagine glycan. Residues 28–50 (LSMVVVSITFFLGVLGNGLVIWV) traverse the membrane as a helical segment. Residues 51 to 61 (AGFRMPHTVTT) lie on the Cytoplasmic side of the membrane. Residues 62-83 (IWYLNLALADFSFTATLPFLLV) traverse the membrane as a helical segment. Topologically, residues 84–100 (EMAMKEKWPFGWFLCKL) are extracellular. C98 and C176 form a disulfide bridge. The chain crosses the membrane as a helical span at residues 101-121 (VHIAVDVNLFGSVFLIAVIAL). Topologically, residues 122–140 (DRCICVLHPVWAQNHRTVS) are cytoplasmic. A helical membrane pass occupies residues 141–162 (LARNVVVGSWIFALILTLPLFL). Residues 163 to 205 (FLTTVRDARGDVHCRLSFVSWGNSVEERLNTAITFVTTRGIIR) are Extracellular-facing. Residues 206-226 (FIVSFSLPMSFVAICYGLITT) form a helical membrane-spanning segment. At 227–242 (KIHKKAFVNSSRPFRV) the chain is on the cytoplasmic side. A helical transmembrane segment spans residues 243-266 (LTGVVASFFICWFPFQLVALLGTV). The Extracellular segment spans residues 267–286 (WLKEMQFSGSYKIIGRLVNP). Residues 287 to 306 (TSSLAFFNSCLNPILYVFMG) traverse the membrane as a helical segment. Over 307-351 (QDFQERLIHSLSSRLQRALSEDSGHISDTRTNLASLPEDIEIKAI) the chain is Cytoplasmic.

The protein belongs to the G-protein coupled receptor 1 family. Expressed exclusively in vomeronasal neurons. Expressed in 0.6 % of a subset of sensory neurons located in the basal layer of the vomeronasal organ. Each neuron appears to express only one receptor gene. Expressed mostly in neutrophils, followed by spleen and lung and expressed at very low levels in heart and liver.

Its subcellular location is the cell membrane. Functionally, low affinity receptor for N-formyl-methionyl peptides. Receptor for lipoxin A4. May have an olfactory function associated with the identification of pathogens or of pathogenic states. This is Formyl peptide receptor-related sequence 1 (Fpr-s1) from Mus musculus (Mouse).